We begin with the raw amino-acid sequence, 234 residues long: OVARIAN TUMOR DOMAIN-containing deubiquitinating enzyme 3 (234 aa).

The OTU domain maps to 76–234; it reads YAVDRVKGDG…SGRNHYDLLR (159 aa). Positions 81 to 87 are cys-loop; sequence VKGDGRC. Aspartate 84 is an active-site residue. Cysteine 87 serves as the catalytic Nucleophile. Residues 154-164 are variable-loop; sequence IGRHDFWGGES. Residues 224-229 form a his-loop region; the sequence is YSGRNH. Histidine 229 is an active-site residue.

The protein belongs to the peptidase C85 family.

It carries out the reaction Thiol-dependent hydrolysis of ester, thioester, amide, peptide and isopeptide bonds formed by the C-terminal Gly of ubiquitin (a 76-residue protein attached to proteins as an intracellular targeting signal).. In terms of biological role, hydrolase that can remove conjugated ubiquitin from proteins in vitro and may therefore play an important regulatory role at the level of protein turnover by preventing degradation. Cysteine protease with a preference for 'Lys-63' over 'Lys-48' over 'Met-1' -linked ubiquitin (UB) tetramers (e.g. Ub3 and Ub4) as substrates. Also cleaves RUB-GST fusion. In Arabidopsis thaliana (Mouse-ear cress), this protein is OVARIAN TUMOR DOMAIN-containing deubiquitinating enzyme 3.